The chain runs to 423 residues: COP9 signalosome complex subunit 3 (423 aa).

Ala2 is modified (N-acetylalanine). In terms of domain architecture, PCI spans 197-365; sequence NFERALYFYE…GMVSFHDNPE (169 aa). Positions 402 to 423 are disordered; the sequence is QFVQKSMGSQEDDSGNKPSSYS. Phosphoserine occurs at positions 407, 410, and 423.

The protein belongs to the CSN3 family. As to quaternary structure, component of the CSN complex, composed of COPS1/GPS1, COPS2, COPS3, COPS4, COPS5, COPS6, COPS7 (COPS7A or COPS7B), COPS8 and COPS9. In the complex, it probably interacts directly with COPS1, COPS4, COPS8 and COPS9. Interacts with CK2 and PKD. Interacts with the translation initiation factor EIF3S6 and IKBKG. Interacts with ERCC6.

It is found in the cytoplasm. Its subcellular location is the nucleus. In terms of biological role, component of the COP9 signalosome complex (CSN), a complex involved in various cellular and developmental processes. The CSN complex is an essential regulator of the ubiquitin (Ubl) conjugation pathway by mediating the deneddylation of the cullin subunits of SCF-type E3 ligase complexes, leading to decrease the Ubl ligase activity of SCF-type complexes such as SCF, CSA or DDB2. The complex is also involved in phosphorylation of p53/TP53, c-jun/JUN, IkappaBalpha/NFKBIA, ITPK1 and IRF8/ICSBP, possibly via its association with CK2 and PKD kinases. CSN-dependent phosphorylation of TP53 and JUN promotes and protects degradation by the Ubl system, respectively. Essential to maintain the survival of epiblast cells and thus the development of the postimplantation embryo. In Bos taurus (Bovine), this protein is COP9 signalosome complex subunit 3 (COPS3).